The primary structure comprises 207 residues: Guanylate kinase (207 aa).

The Guanylate kinase-like domain maps to 3 to 181 (GQLFVICGPS…AVEMVVSIVR (179 aa)). 10–17 (GPSGAGKT) contributes to the ATP binding site.

Belongs to the guanylate kinase family.

Its subcellular location is the cytoplasm. The enzyme catalyses GMP + ATP = GDP + ADP. Essential for recycling GMP and indirectly, cGMP. This chain is Guanylate kinase (gmk), found in Thermotoga maritima (strain ATCC 43589 / DSM 3109 / JCM 10099 / NBRC 100826 / MSB8).